The chain runs to 318 residues: Thymidylate synthase (318 aa).

DUMP-binding positions include Arg25 and 180–181 (RR). Cys200 functions as the Nucleophile in the catalytic mechanism. Residues 220–223 (RSGD), Asn231, and 261–263 (HIY) contribute to the dUMP site. Asp223 provides a ligand contact to (6R)-5,10-methylene-5,6,7,8-tetrahydrofolate. Residue Ala317 participates in (6R)-5,10-methylene-5,6,7,8-tetrahydrofolate binding.

It belongs to the thymidylate synthase family. Bacterial-type ThyA subfamily. As to quaternary structure, homodimer.

It localises to the cytoplasm. It carries out the reaction dUMP + (6R)-5,10-methylene-5,6,7,8-tetrahydrofolate = 7,8-dihydrofolate + dTMP. It participates in pyrimidine metabolism; dTTP biosynthesis. Functionally, catalyzes the reductive methylation of 2'-deoxyuridine-5'-monophosphate (dUMP) to 2'-deoxythymidine-5'-monophosphate (dTMP) while utilizing 5,10-methylenetetrahydrofolate (mTHF) as the methyl donor and reductant in the reaction, yielding dihydrofolate (DHF) as a by-product. This enzymatic reaction provides an intracellular de novo source of dTMP, an essential precursor for DNA biosynthesis. The sequence is that of Thymidylate synthase from Bacillus thuringiensis subsp. konkukian (strain 97-27).